The sequence spans 494 residues: MKAENCCIVIFGASGDLTYRKLIPALYNLYKIDRLGEDFSVLGVARTELNDKSFREKMRQTLIKNEGAKGECLEQFCSHLYYQAVNTADKADYAKLVPRLDELHDTYRTEGNTLYYLSTPPSLYGVIPECLGEHGLNKEDRGWKRLIVEKPFGYDRETAEALDIQIHRFFEEHQIYRIDHYLGKETVQNLLVLRFSNGWFEPLWNRNFIDYIEITGAESIGVEERGGYYDGSGAMRDMFQNHLLQVLAMVAMEPPVIINANSMRDEVAKVLHCLRPLTQEDVEHNLVLGQYVAGEVDGEWVKGYLEEKGVPPYSTTETYMALRCEIENWRWAGVPFYVRTGKRLPARVTEIVIHFKTTPHPVFSQNAPENKLIIRIQPDEGISMRFGLKKPGAGFEAKEVSMDFRYADLAGATVMTAYERLLLDAMKGDATLFARTDAVHAAWKFVQPILNYKAQGGRLYDYEAGTWGPTAADKLIAKSGRVWRRPSGLMKKKV.

The NADP(+) site is built by Arg-46 and Lys-150. His-180, Lys-184, Glu-218, and Asp-237 together coordinate substrate. Residue His-242 is the Proton acceptor of the active site. Lys-342 is a substrate binding site.

This sequence belongs to the glucose-6-phosphate dehydrogenase family.

The enzyme catalyses D-glucose 6-phosphate + NADP(+) = 6-phospho-D-glucono-1,5-lactone + NADPH + H(+). The protein operates within carbohydrate degradation; pentose phosphate pathway; D-ribulose 5-phosphate from D-glucose 6-phosphate (oxidative stage): step 1/3. Functionally, catalyzes the oxidation of glucose 6-phosphate to 6-phosphogluconolactone. This Aggregatibacter actinomycetemcomitans (Actinobacillus actinomycetemcomitans) protein is Glucose-6-phosphate 1-dehydrogenase.